Reading from the N-terminus, the 847-residue chain is Lethal(3)malignant brain tumor-like protein 1 (847 aa).

Composition is skewed to basic and acidic residues over residues 65–82 (FPRE…EKGV) and 144–155 (AVKEGHAKKDGD). Disordered regions lie at residues 65–87 (FPRE…SEPI), 142–163 (AEAV…PTSR), and 237–296 (VKKR…SEEK). MBT repeat units follow at residues 300-400 (WSWA…LQPP), 408-507 (FSWT…LTPP), and 516-611 (FIWE…LQPP). An interaction with monomethylated and dimethylated peptides region spans residues 473 to 480 (FDNWDDTY). Residues 639–682 (SKYSFHHRKCPTPGCDGSGHVTGRFTAHYCLSGCPLAEKNQGKL) form a CCHHC-type zinc finger. Residues Cys648, Cys653, His666, and Cys672 each contribute to the Zn(2+) site. One can recognise an SAM domain in the interval 778–842 (WTIDEVFSFV…YNAILMFKNA (65 aa)).

Homodimer.

The protein resides in the nucleus. Polycomb group (PcG) protein that specifically recognizes and binds mono- and dimethyllysine residues on target proteins, thereby acting as a 'reader' of a network of post-translational modifications. PcG proteins maintain the transcriptionally repressive state of genes: acts as a chromatin compaction factor by recognizing and binding mono- and dimethylated histone H1b/H1-4 at 'Lys-26' (H1bK26me1 and H1bK26me2) and histone H4 at 'Lys-20' (H4K20me1 and H4K20me2), leading to condense chromatin and repress transcription. The sequence is that of Lethal(3)malignant brain tumor-like protein 1 (L3MBTL1) from Gallus gallus (Chicken).